The chain runs to 120 residues: Glutamate--tRNA ligase (120 aa).

Belongs to the class-I aminoacyl-tRNA synthetase family. Glutamate--tRNA ligase type 1 subfamily. In terms of assembly, monomer.

The protein resides in the cytoplasm. The catalysed reaction is tRNA(Glu) + L-glutamate + ATP = L-glutamyl-tRNA(Glu) + AMP + diphosphate. In terms of biological role, catalyzes the attachment of glutamate to tRNA(Glu) in a two-step reaction: glutamate is first activated by ATP to form Glu-AMP and then transferred to the acceptor end of tRNA(Glu). The protein is Glutamate--tRNA ligase (gltX) of Staphylococcus xylosus.